An 89-amino-acid chain; its full sequence is YcgL domain-containing protein Asuc_1390 (89 aa).

The region spanning 1 to 85 is the YcgL domain; sequence MLCAIYKSKK…KDDWLFTIEK (85 aa).

The polypeptide is YcgL domain-containing protein Asuc_1390 (Actinobacillus succinogenes (strain ATCC 55618 / DSM 22257 / CCUG 43843 / 130Z)).